Reading from the N-terminus, the 363-residue chain is Chemerin-like receptor 1 (363 aa).

At 1 to 39 the chain is on the extracellular side; that stretch reads MDFEDYNSTYEDSYTDDFDTIVALEEFSPLEGRVVRIFL. N7 is a glycosylation site (N-linked (GlcNAc...) asparagine). Residues 40-60 form a helical membrane-spanning segment; that stretch reads VVVYSIICFLGILGNGLVIVI. At 61–71 the chain is on the cytoplasmic side; that stretch reads ATFKMKKTVNT. A helical transmembrane segment spans residues 72-92; it reads VWFLNLAVADFLFNVFLPIHI. Residues 93–109 are Extracellular-facing; sequence AYAAMDYHWVFGTAMCK. A disulfide bridge connects residues C108 and C185. A helical transmembrane segment spans residues 110 to 130; the sequence is ISNFLLIHNMYTSVFLLTVIS. Residues 131–152 lie on the Cytoplasmic side of the membrane; the sequence is FDRCISVLLPVWSQNHRSIRLA. The helical transmembrane segment at 153 to 173 threads the bilayer; the sequence is YMACVVIWVLAFFLSSPSLVF. Residues 174–220 lie on the Extracellular side of the membrane; sequence RDTAHLHGKISCFNNFSLSATSSSSWPTHPQMDTVGFGRQMVVTITR. N-linked (GlcNAc...) asparagine glycosylation is present at N188. A helical transmembrane segment spans residues 221–241; sequence FLCGFLVPVLIISACYFTIVY. Topologically, residues 242-256 are cytoplasmic; that stretch reads KLRRNRLAKTKKPFK. A helical transmembrane segment spans residues 257 to 277; it reads IIVTIIITFFLCWCPYHTLYL. Residues 278-283 are Extracellular-facing; sequence LELHHR. Residues 284–304 form a helical membrane-spanning segment; sequence AMPGSVFSLGVPLATAIAIAN. The Cytoplasmic segment spans residues 305-363; the sequence is SCMNPILYVFMGQDFKKFKVALFSRLVNALSEDTGHSSYPSHRSFTKMSSMNERETSML. Residue S335 is modified to Phosphoserine. Residues 337 to 363 form a disordered region; it reads DTGHSSYPSHRSFTKMSSMNERETSML. T338 carries the phosphothreonine modification. Over residues 340-355 the composition is skewed to polar residues; that stretch reads HSSYPSHRSFTKMSSM. 3 positions are modified to phosphoserine: S345, S348, and S354.

This sequence belongs to the chemokine-like receptor (CMKLR) family. As to expression, predominantly expressed in spleen and temperately in adipose tissue.

The protein localises to the cell membrane. Functionally, receptor for the chemoattractant adipokine chemerin/RARRES2 and for the omega-3 fatty acid derived molecule resolvin E1. Interaction with RARRES2 initiates activation of G proteins G(i)/G(o) and beta-arrestin pathways inducing cellular responses via second messenger pathways such as intracellular calcium mobilization, phosphorylation of MAP kinases MAPK1/MAPK3 (ERK1/2), TYRO3, MAPK14/P38MAPK and PI3K leading to multifunctional effects, like, reduction of immune responses, enhancing of adipogenesis and angionesis. Resolvin E1 down-regulates cytokine production in macrophages by reducing the activation of MAPK1/3 (ERK1/2) and NF-kappa-B. Positively regulates adipogenesis and adipocyte metabolism. In Sus scrofa (Pig), this protein is Chemerin-like receptor 1 (CMLKR1).